Reading from the N-terminus, the 438-residue chain is Trigger factor (438 aa).

One can recognise a PPIase FKBP-type domain in the interval 163-248 (GDIITIDYEG…VKEIKRKELA (86 aa)).

This sequence belongs to the FKBP-type PPIase family. Tig subfamily.

It localises to the cytoplasm. The enzyme catalyses [protein]-peptidylproline (omega=180) = [protein]-peptidylproline (omega=0). Its function is as follows. Involved in protein export. Acts as a chaperone by maintaining the newly synthesized protein in an open conformation. Functions as a peptidyl-prolyl cis-trans isomerase. The protein is Trigger factor of Desulforudis audaxviator (strain MP104C).